A 228-amino-acid polypeptide reads, in one-letter code: Cytidylate kinase (228 aa).

17–25 (GPTASGKGT) is a binding site for ATP.

It belongs to the cytidylate kinase family. Type 1 subfamily.

The protein resides in the cytoplasm. The catalysed reaction is CMP + ATP = CDP + ADP. It catalyses the reaction dCMP + ATP = dCDP + ADP. This is Cytidylate kinase from Burkholderia vietnamiensis (strain G4 / LMG 22486) (Burkholderia cepacia (strain R1808)).